The sequence spans 79 residues: Small ribosomal subunit protein uS17 (79 aa).

This sequence belongs to the universal ribosomal protein uS17 family. In terms of assembly, part of the 30S ribosomal subunit.

In terms of biological role, one of the primary rRNA binding proteins, it binds specifically to the 5'-end of 16S ribosomal RNA. This is Small ribosomal subunit protein uS17 from Mesorhizobium japonicum (strain LMG 29417 / CECT 9101 / MAFF 303099) (Mesorhizobium loti (strain MAFF 303099)).